A 430-amino-acid polypeptide reads, in one-letter code: MANVVVVGAQWGDEGKGKIVDWLSERADVIARFQGGHNAGHTLVIGNQVFKLSLLPSGIVRKGKMAVIGNGVVLDPWSLFAEIDKLSAQGVEISPANLMIAENTPLILPLHQDLDKLREEAAGASKIGTTGRGIGPAYEDKVGRRTIRVADLGDEETLDSRLDRLLAHHDALRQGLGAAPIDRAELRAKLLEIAPKLLQYAQPVWKVMNDYRKAGKRILFEGAQGSLLDIDFGTYPYVTSSTTMSGMAASGTGLGPSAIGFVLGIVKAYTTRVGEGPFPTELDDADGQRLGERGHEFGTVTGRKRRCGWFDAVLVRQTCAISGVDGIALTKLDVLDGFQTLKICTGYEVDGQHYDHLPTAASLQAKAKPVYEEMEGWQESTQGARSWADLPANAIKYVRRIEELIQCPVALLSTSPERDDTILVTDPFAD.

GTP is bound by residues 12-18 (GDEGKGK) and 40-42 (GHT). The active-site Proton acceptor is the D13. Residues D13 and G40 each coordinate Mg(2+). Residues 13–16 (DEGK), 38–41 (NAGH), T130, R144, Q224, T239, and R303 each bind IMP. Catalysis depends on H41, which acts as the Proton donor. Residue 299–305 (TVTGRKR) coordinates substrate. Residues R305, 331–333 (KLD), and 413–415 (STS) contribute to the GTP site.

This sequence belongs to the adenylosuccinate synthetase family. As to quaternary structure, homodimer. Mg(2+) serves as cofactor.

It localises to the cytoplasm. It carries out the reaction IMP + L-aspartate + GTP = N(6)-(1,2-dicarboxyethyl)-AMP + GDP + phosphate + 2 H(+). The protein operates within purine metabolism; AMP biosynthesis via de novo pathway; AMP from IMP: step 1/2. In terms of biological role, plays an important role in the de novo pathway of purine nucleotide biosynthesis. Catalyzes the first committed step in the biosynthesis of AMP from IMP. The polypeptide is Adenylosuccinate synthetase (Paracoccus denitrificans (strain Pd 1222)).